We begin with the raw amino-acid sequence, 1074 residues long: Calcium-transporting ATPase 8, plasma membrane-type (1074 aa).

The disordered stretch occupies residues 1 to 33; the sequence is MTSLLKSSPGRRRGGDVESGKSEHADSDSDTFY. Over 1–180 the chain is Cytoplasmic; that stretch reads MTSLLKSSPG…NTYPRKKGKG (180 aa). Positions 13 to 27 are enriched in basic and acidic residues; sequence RGGDVESGKSEHADS. Positions 43–54 are interaction with calmodulin; that stretch reads RLQQWRKAALVL. Residues 181–201 traverse the membrane as a helical segment; the sequence is FLRFLWDACHDLTLIILMVAA. Residues 202-219 are Extracellular-facing; the sequence is VASLALGIKTEGIKEGWY. The helical transmembrane segment at 220 to 240 threads the bilayer; the sequence is DGGSIAFAVILVIVVTAVSDY. Over 241 to 369 the chain is Cytoplasmic; it reads KQSLQFQNLN…GEETPLQVRL (129 aa). Residues 370 to 389 form a helical membrane-spanning segment; sequence NGVATFIGSIGLAVAAAVLV. The Extracellular portion of the chain corresponds to 390 to 426; it reads ILLTRYFTGHTKDNNGGPQFVKGKTKVGHVIDDVVKV. The helical transmembrane segment at 427-444 threads the bilayer; it reads LTVAVTIVVVAVPEGLPL. Residues 445 to 840 are Cytoplasmic-facing; sequence AVTLTLAYSM…RWGRSVYANI (396 aa). Catalysis depends on Asp-482, which acts as the 4-aspartylphosphate intermediate. Asp-785 and Asp-789 together coordinate Mg(2+). Residues 841 to 859 form a helical membrane-spanning segment; it reads QKFIQFQLTVNVAALVINV. Residues 860 to 870 are Extracellular-facing; that stretch reads VAAISSGDVPL. The helical transmembrane segment at 871–891 threads the bilayer; sequence TAVQLLWVNLIMDTLGALALA. The Cytoplasmic portion of the chain corresponds to 892–911; the sequence is TEPPTDHLMGRPPVGRKEPL. A helical membrane pass occupies residues 912-934; the sequence is ITNIMWRNLLIQAIYQVSVLLTL. Residues 935 to 949 are Extracellular-facing; sequence NFRGISILGLEHEVH. Residues 950–971 traverse the membrane as a helical segment; sequence EHATRVKNTIIFNAFVLCQAFN. At 972 to 989 the chain is on the cytoplasmic side; that stretch reads EFNARKPDEKNIFKGVIK. Residues 990–1011 form a helical membrane-spanning segment; sequence NRLFMGIIVITLVLQVIIVEFL. Residues 1012-1021 lie on the Extracellular side of the membrane; the sequence is GKFASTTKLN. The chain crosses the membrane as a helical span at residues 1022–1043; sequence WKQWLICVGIGVISWPLALVGK. At 1044 to 1074 the chain is on the cytoplasmic side; sequence FIPVPAAPISNKLKVLKFWGKKKNSSGEGSL.

It belongs to the cation transport ATPase (P-type) (TC 3.A.3) family. Type IIB subfamily.

It localises to the cell membrane. It carries out the reaction Ca(2+)(in) + ATP + H2O = Ca(2+)(out) + ADP + phosphate + H(+). Its activity is regulated as follows. Activated by calmodulin. Its function is as follows. This magnesium-dependent enzyme catalyzes the hydrolysis of ATP coupled with the translocation of calcium from the cytosol out of the cell. The protein is Calcium-transporting ATPase 8, plasma membrane-type (ACA8) of Arabidopsis thaliana (Mouse-ear cress).